The following is a 385-amino-acid chain: Probable protein phosphatase 2C 79 (385 aa).

Positions 1-18 (MLSLFFNFLTSCLWPSSS) are cleaved as a signal peptide. The PPM-type phosphatase domain occupies 47–356 (DFSMAVVQAN…DDITVVVLFL (310 aa)). Position 76 is a phosphoserine (S76). Mn(2+) contacts are provided by D87, G88, D288, and D347.

Belongs to the PP2C family. The cofactor is Mg(2+). Requires Mn(2+) as cofactor.

It carries out the reaction O-phospho-L-seryl-[protein] + H2O = L-seryl-[protein] + phosphate. It catalyses the reaction O-phospho-L-threonyl-[protein] + H2O = L-threonyl-[protein] + phosphate. May dephosphorylate and repress plasma membrane H(+)-ATPases (PM H(+)-ATPases, e.g. AHA1 and AHA2), thus influencing negatively plant growth and fitness. The chain is Probable protein phosphatase 2C 79 from Arabidopsis thaliana (Mouse-ear cress).